The primary structure comprises 84 residues: Cell division topological specificity factor (84 aa).

This sequence belongs to the MinE family.

Its function is as follows. Prevents the cell division inhibition by proteins MinC and MinD at internal division sites while permitting inhibition at polar sites. This ensures cell division at the proper site by restricting the formation of a division septum at the midpoint of the long axis of the cell. This is Cell division topological specificity factor from Ectopseudomonas mendocina (strain ymp) (Pseudomonas mendocina).